A 338-amino-acid chain; its full sequence is MSITRRTTLSKYLIEQQRETHNLPADLRLLIEVVARACKAISYNVSKGALGDALGTAGSENVQGEVQKKLDILSNEILLDANEWGGNLAAMASEEMETFFPIPANYPRGEYLLVFDPLDGSSNIDVNVSIGTIFSVLRCPDGQQATEQSFLQPGTEQVAAGYAVYGPQTVFVLTTGNGVNCFTLDREVGSWVLTQSNLRIPEDTREYAINASNARHWYEPVKRYIDELNAGAEGPRGENFNMRWIASMVADVHRILNRGGIFMYPADKRTPDRPGKLRLMYEANPMSFIVEQAGGAATTGLKRILDVQPTGLHQRVPVILGSKNEVERVARYHEQAQS.

Mg(2+) contacts are provided by glutamate 94, aspartate 116, leucine 118, and aspartate 119. Substrate contacts are provided by residues 119–122, asparagine 210, and lysine 276; that span reads DGSS. Glutamate 282 lines the Mg(2+) pocket.

The protein belongs to the FBPase class 1 family. As to quaternary structure, homotetramer. Mg(2+) is required as a cofactor.

It localises to the cytoplasm. It carries out the reaction beta-D-fructose 1,6-bisphosphate + H2O = beta-D-fructose 6-phosphate + phosphate. It participates in carbohydrate biosynthesis; gluconeogenesis. The sequence is that of Fructose-1,6-bisphosphatase class 1 from Burkholderia mallei (strain NCTC 10247).